A 213-amino-acid chain; its full sequence is Imidazole glycerol phosphate synthase subunit HisH (213 aa).

Residues Ser-4–Pro-213 enclose the Glutamine amidotransferase type-1 domain. Cys-83 serves as the catalytic Nucleophile. Active-site residues include His-193 and Glu-195.

Heterodimer of HisH and HisF.

It is found in the cytoplasm. The enzyme catalyses 5-[(5-phospho-1-deoxy-D-ribulos-1-ylimino)methylamino]-1-(5-phospho-beta-D-ribosyl)imidazole-4-carboxamide + L-glutamine = D-erythro-1-(imidazol-4-yl)glycerol 3-phosphate + 5-amino-1-(5-phospho-beta-D-ribosyl)imidazole-4-carboxamide + L-glutamate + H(+). It carries out the reaction L-glutamine + H2O = L-glutamate + NH4(+). It participates in amino-acid biosynthesis; L-histidine biosynthesis; L-histidine from 5-phospho-alpha-D-ribose 1-diphosphate: step 5/9. IGPS catalyzes the conversion of PRFAR and glutamine to IGP, AICAR and glutamate. The HisH subunit catalyzes the hydrolysis of glutamine to glutamate and ammonia as part of the synthesis of IGP and AICAR. The resulting ammonia molecule is channeled to the active site of HisF. This is Imidazole glycerol phosphate synthase subunit HisH from Burkholderia pseudomallei (strain K96243).